We begin with the raw amino-acid sequence, 172 residues long: C-phycocyanin beta chain (172 aa).

Asn-72 is subject to N4-methylasparagine. (2R,3E)-phycocyanobilin is bound by residues Cys-82 and Cys-153.

It belongs to the phycobiliprotein family. Heterodimer of an alpha and a beta subunit, which further assembles into trimers and the trimers into hexamers. The basic functional unit of phycobiliproteins is a ring-shaped hexamer formed from two back-to-back trimers contacting via the alpha chain subunits. The trimers are composed of alpha/beta subunit heterodimers arranged around a three-fold axis of symmetry. The phycoerythrins also contain a gamma subunit which is located in the center of the hexamer. Post-translationally, contains two covalently linked phycocyanobilin chromophores.

It is found in the plastid. It localises to the cyanelle thylakoid membrane. Its function is as follows. Light-harvesting photosynthetic bile pigment-protein from the phycobiliprotein complex (phycobilisome, PBS). Phycocyanin is the major phycobiliprotein in the PBS rod. The protein is C-phycocyanin beta chain (cpcB) of Cyanophora paradoxa.